Here is a 118-residue protein sequence, read N- to C-terminus: Na(+)/H(+) antiporter subunit G1 (118 aa).

3 helical membrane passes run 9 to 29 (IALI…IGIL), 41 to 61 (AGKA…LFFI), and 70 to 90 (QLIV…HLII).

This sequence belongs to the CPA3 antiporters (TC 2.A.63) subunit G family. In terms of assembly, may form a heterooligomeric complex that consists of seven subunits: mnhA1, mnhB1, mnhC1, mnhD1, mnhE1, mnhF1 and mnhG1.

It localises to the cell membrane. Its function is as follows. Mnh complex is a Na(+)/H(+) antiporter involved in Na(+) excretion. The chain is Na(+)/H(+) antiporter subunit G1 (mnhG1) from Staphylococcus saprophyticus subsp. saprophyticus (strain ATCC 15305 / DSM 20229 / NCIMB 8711 / NCTC 7292 / S-41).